The sequence spans 555 residues: MFS-type transporter VdtG (555 aa).

Positions 1-20 are disordered; sequence MNGNGTADKPGPPGGKPFGP. A glycan (N-linked (GlcNAc...) asparagine) is linked at N4. The next 3 membrane-spanning stretches (helical) occupy residues 30–50, 71–91, and 101–121; these read TGFK…LTAL, DIGW…LLFG, and WVFL…GAAP. Residue N122 is glycosylated (N-linked (GlcNAc...) asparagine). The next 2 membrane-spanning stretches (helical) occupy residues 132–152 and 162–182; these read IAGL…FFTV and GIAG…GGGF. The N-linked (GlcNAc...) asparagine glycan is linked to N185. The next 4 membrane-spanning stretches (helical) occupy residues 190–210, 232–252, 262–282, and 304–324; these read WCFY…LLFL, LGNL…QWGG, IVAL…VQLW, and AFTI…PIWF. Residue N329 is glycosylated (N-linked (GlcNAc...) asparagine). A run of 5 helical transmembrane segments spans residues 337 to 357, 364 to 384, 393 to 413, 425 to 445, and 497 to 517; these read VMML…GFII, TPFM…LTTF, WIGY…QASL, PIGI…FLAV, and LMDV…AAAF. Residues 528–555 form a disordered region; it reads AAGPGGPGGPGGPGGPGGPEGLRGGNKV. Over residues 530–555 the composition is skewed to gly residues; the sequence is GPGGPGGPGGPGGPGGPEGLRGGNKV.

It belongs to the major facilitator superfamily. TCR/Tet family.

The protein localises to the endoplasmic reticulum membrane. MFS-type transporter; part of the gene cluster that mediates the biosynthesis of viriditoxin, one of the 'classical' secondary metabolites produced by fungi and that has antibacterial activity. Is not essential for viriditoxin production. The sequence is that of MFS-type transporter VdtG from Byssochlamys spectabilis (Paecilomyces variotii).